Reading from the N-terminus, the 1393-residue chain is Polarized growth protein RAX2 (1393 aa).

An N-terminal signal peptide occupies residues 1–21 (MLVQFQQLLLLLISIIKLCQA). Residues 22-1329 (DDNDNSFFQP…TNKNLSRGKV (1308 aa)) are Extracellular-facing. N-linked (GlcNAc...) asparagine glycosylation is found at asparagine 62, asparagine 85, asparagine 105, asparagine 125, asparagine 133, asparagine 139, asparagine 164, asparagine 186, asparagine 195, asparagine 212, asparagine 256, asparagine 260, asparagine 266, asparagine 269, asparagine 362, asparagine 398, asparagine 405, asparagine 479, asparagine 536, asparagine 542, asparagine 565, asparagine 599, asparagine 646, asparagine 649, asparagine 653, asparagine 674, asparagine 689, asparagine 696, asparagine 702, asparagine 714, asparagine 747, asparagine 764, asparagine 768, asparagine 792, asparagine 829, asparagine 863, asparagine 899, asparagine 935, asparagine 946, asparagine 958, asparagine 985, asparagine 1020, asparagine 1030, asparagine 1041, asparagine 1213, asparagine 1232, asparagine 1262, and asparagine 1323. The helical transmembrane segment at 1330-1350 (VGISLACALGSTTLLGLLYII) threads the bilayer. Residues 1351-1393 (PYFALFKNRKDGYFQPERIHEDEMMDAVNPEDLLHEIDLQREK) are Cytoplasmic-facing.

It belongs to the RAX2 family.

The protein localises to the cell membrane. It localises to the cell tip. Its function is as follows. Required for establishing sites of emergence of yeast and hyphal daughters and for maintaining the linearity of hyphal growth, but not involved in responses that require a reorientation of the direction of already established hyphal growth (tropisms). Does not play a role in penetration or injury of human epithelial cells. This Candida albicans (strain SC5314 / ATCC MYA-2876) (Yeast) protein is Polarized growth protein RAX2.